The sequence spans 277 residues: Radial spoke head protein 9 homolog (277 aa).

Belongs to the flagellar radial spoke RSP9 family. In terms of assembly, component of axonemal radial spoke complexes.

Its subcellular location is the cytoplasm. It is found in the cytoskeleton. The protein resides in the cilium axoneme. The protein localises to the flagellum axoneme. It localises to the cell projection. Its subcellular location is the kinocilium. Its function is as follows. Functions as part of axonemal radial spoke complexes that play an important part in the motility of sperm and cilia. Essential for both the radial spoke head assembly and the central pair microtubule stability in ependymal motile cilia. Required for motility of olfactory and neural cilia and for the structural integrity of ciliary axonemes in both 9+0 and 9+2 motile cilia. This Xenopus tropicalis (Western clawed frog) protein is Radial spoke head protein 9 homolog (rsph9).